The chain runs to 508 residues: Photosystem II CP47 reaction center protein (508 aa).

6 helical membrane passes run 21–36 (SVHL…WAGS), 101–115 (IVLS…IWHW), 140–156 (GIHL…FGAF), 203–218 (IAAG…FHLT), 237–252 (VLSS…AFVV), and 457–472 (CFAL…HGAR).

This sequence belongs to the PsbB/PsbC family. PsbB subfamily. PSII is composed of 1 copy each of membrane proteins PsbA, PsbB, PsbC, PsbD, PsbE, PsbF, PsbH, PsbI, PsbJ, PsbK, PsbL, PsbM, PsbT, PsbX, PsbY, PsbZ, Psb30/Ycf12, at least 3 peripheral proteins of the oxygen-evolving complex and a large number of cofactors. It forms dimeric complexes. It depends on Binds multiple chlorophylls. PSII binds additional chlorophylls, carotenoids and specific lipids. as a cofactor.

The protein resides in the plastid. It is found in the chloroplast thylakoid membrane. In terms of biological role, one of the components of the core complex of photosystem II (PSII). It binds chlorophyll and helps catalyze the primary light-induced photochemical processes of PSII. PSII is a light-driven water:plastoquinone oxidoreductase, using light energy to abstract electrons from H(2)O, generating O(2) and a proton gradient subsequently used for ATP formation. The chain is Photosystem II CP47 reaction center protein from Chlorokybus atmophyticus (Soil alga).